Here is a 475-residue protein sequence, read N- to C-terminus: D(1B) dopamine receptor (475 aa).

The Extracellular segment spans residues 1–38 (MLPPGRNRTAQPARLGLQRQLAQVDAPAGSATPLGPAQ). Asparagine 7 is a glycosylation site (N-linked (GlcNAc...) asparagine). The chain crosses the membrane as a helical span at residues 39-64 (VVTAGLLTLLIVWTLLGNVLVCAAIV). The Cytoplasmic portion of the chain corresponds to 65 to 75 (RSRHLRAKMTN). Residues 76 to 102 (IFIVSLAVSDLFVALLVMPWKAVAEVA) traverse the membrane as a helical segment. At 103–111 (GYWPFGTFC) the chain is on the extracellular side. Cysteine 111 and cysteine 211 are joined by a disulfide. The chain crosses the membrane as a helical span at residues 112–134 (DIWVAFDIMCSTASILNLCIISV). Residues 135-153 (DRYWAISRPFRYERKMTQR) are Cytoplasmic-facing. A helical transmembrane segment spans residues 154 to 179 (VALVMVGLAWTLSILISFIPVQLNWH). Residues 180 to 215 (RDKAGSQGQEGLLSNGTPWEEGWELEGRTENCDSSL) are Extracellular-facing. Residues 216–240 (NRTYAISSSLISFYIPVAIMIVTYT) traverse the membrane as a helical segment. The Cytoplasmic segment spans residues 241-289 (RIYRIAQVQIRRISSLERAAEHAQSCRSRGAYEPDPSLRASIKKETKVF). Residues 290–317 (KTLSMIMGVFVCCWLPFFILNCMVPFCS) traverse the membrane as a helical segment. The Extracellular segment spans residues 318–335 (SGDAEGPKTGFPCVSETT). Residues 336 to 357 (FDIFVWFGWANSSLNPIIYAFN) form a helical membrane-spanning segment. Residues 358–475 (ADFRKVFAQL…LTPNCFDKTA (118 aa)) lie on the Cytoplasmic side of the membrane. Cysteine 370 carries S-palmitoyl cysteine lipidation. The segment at 415–443 (SGDREVGEEEEEGPFDHMSQISPTTPDGD) is disordered.

Belongs to the G-protein coupled receptor 1 family. As to expression, brain, in the lateral mammillary nuclei, the anterior pretectal nuclei, and several layers of the hippocampus.

The protein localises to the cell membrane. Dopamine receptor whose activity is mediated by G proteins which activate adenylyl cyclase. The chain is D(1B) dopamine receptor (Drd5) from Rattus norvegicus (Rat).